The sequence spans 418 residues: Intracellular coagulation inhibitor 1 (418 aa).

A signal peptide spans 1-24; sequence MKLGDWKFCLLLFQLMFLTNVCLS. Residues Asn-49 and Asn-404 are each glycosylated (N-linked (GlcNAc...) asparagine).

Belongs to the serpin family. Monomer. Forms a covalent heterodimer with clotting factor C. Interacts with big defensin. In terms of processing, N-glycosylated. Expressed in hemocytes (at protein level).

The protein localises to the secreted. Functionally, serine protease inhibitor that specifically inhibits clotting factor C. Does not inhibit clotting factor B or proclotting enzyme. In Tachypleus tridentatus (Japanese horseshoe crab), this protein is Intracellular coagulation inhibitor 1.